We begin with the raw amino-acid sequence, 178 residues long: Signal peptidase complex subunit 2 (178 aa).

Residues 1-37 are Cytoplasmic-facing; the sequence is MSSAKPINVYSIPELNQALDEALPSVFARLNYERSYA. Residues 38 to 58 traverse the membrane as a helical segment; sequence LLDAKLYIGYSIAVVAGLSFF. Residues 59-67 are Lumenal-facing; sequence LDKKFERDQ. A helical transmembrane segment spans residues 68-88; the sequence is IVTYQKLLVGAYFVLSLLFWY. Residues 89–178 lie on the Cytoplasmic side of the membrane; it reads FSRFIEKGTV…HNVLDTKKNE (90 aa).

It belongs to the SPCS2 family. In terms of assembly, component of the signal peptidase complex (SPC) composed of a catalytic subunit SEC11 and three accessory subunits SPC1, SPC2 and SPC3. The complex induces a local thinning of the ER membrane which is used to measure the length of the signal peptide (SP) h-region of protein substrates. This ensures the selectivity of the complex towards h-regions shorter than 18-20 amino acids. SPC associates with the translocon complex. Interacts with SBH1 and SEB2/SBH2.

It localises to the endoplasmic reticulum membrane. Functionally, component of the signal peptidase complex (SPC) which catalyzes the cleavage of N-terminal signal sequences from nascent proteins as they are translocated into the lumen of the endoplasmic reticulum. Enhances the enzymatic activity of SPC and facilitates the interactions between different components of the translocation site. In Saccharomyces cerevisiae (strain ATCC 204508 / S288c) (Baker's yeast), this protein is Signal peptidase complex subunit 2 (SPC2).